The following is a 209-amino-acid chain: Translation initiation factor 2 subunit beta (209 aa).

The TRAM domain maps to 144–202 (TIEEGKEYVVEITEVGSSGEGRTNYKGYTIFVPGAKRGETVKVRIKKVKNDVAIGEIIE).

The protein belongs to the eIF-2-beta/eIF-5 family. As to quaternary structure, heterotrimer composed of an alpha, a beta and a gamma chain.

Functionally, eIF-2 functions in the early steps of protein synthesis by forming a ternary complex with GTP and initiator tRNA. This is Translation initiation factor 2 subunit beta (eif2b) from Thermoplasma acidophilum (strain ATCC 25905 / DSM 1728 / JCM 9062 / NBRC 15155 / AMRC-C165).